Here is a 606-residue protein sequence, read N- to C-terminus: DNA-directed RNA polymerase III subunit RPC3 (606 aa).

The segment at L533–L554 is leucine-zipper.

This sequence belongs to the RNA polymerase beta chain family. As to quaternary structure, component of the RNA polymerase III (Pol III) complex consisting of 17 subunits.

The protein resides in the nucleus. Functionally, DNA-dependent RNA polymerase catalyzes the transcription of DNA into RNA using the four ribonucleoside triphosphates as substrates. Specific core component of RNA polymerase III which synthesizes small RNAs, such as 5S rRNA and tRNAs. This Debaryomyces hansenii (strain ATCC 36239 / CBS 767 / BCRC 21394 / JCM 1990 / NBRC 0083 / IGC 2968) (Yeast) protein is DNA-directed RNA polymerase III subunit RPC3 (RPC82).